The chain runs to 314 residues: Aspartate carbamoyltransferase catalytic subunit (314 aa).

Carbamoyl phosphate-binding residues include Arg-58 and Thr-59. Lys-86 lines the L-aspartate pocket. Residues Arg-108, His-136, and Gln-139 each coordinate carbamoyl phosphate. Residues Arg-169 and Arg-223 each contribute to the L-aspartate site. Carbamoyl phosphate is bound by residues Gly-264 and Pro-265.

The protein belongs to the aspartate/ornithine carbamoyltransferase superfamily. ATCase family. In terms of assembly, heterododecamer (2C3:3R2) of six catalytic PyrB chains organized as two trimers (C3), and six regulatory PyrI chains organized as three dimers (R2).

It carries out the reaction carbamoyl phosphate + L-aspartate = N-carbamoyl-L-aspartate + phosphate + H(+). Its pathway is pyrimidine metabolism; UMP biosynthesis via de novo pathway; (S)-dihydroorotate from bicarbonate: step 2/3. In terms of biological role, catalyzes the condensation of carbamoyl phosphate and aspartate to form carbamoyl aspartate and inorganic phosphate, the committed step in the de novo pyrimidine nucleotide biosynthesis pathway. This chain is Aspartate carbamoyltransferase catalytic subunit, found in Roseobacter denitrificans (strain ATCC 33942 / OCh 114) (Erythrobacter sp. (strain OCh 114)).